Here is a 170-residue protein sequence, read N- to C-terminus: Type IV pilus assembly protein C (170 aa).

The signal sequence occupies residues 1-23 (MKSKLPLILINLSLISSPLGANA). Residues 87–107 (KTVSKPAKSNTPPQQAPVNNS) form a disordered region. Positions 93–107 (AKSNTPPQQAPVNNS) are enriched in polar residues. Residues 109–166 (RSILEAELSNERKALTEAQKMLSQARLAKGGNINHQKINALQSNVLDRQQNIQALQRE) are a coiled coil.

The protein localises to the periplasm. Required for stabilizing type IV pilus (T4p) in extended, nonretracted conformation on the bacterial cell surface. The sequence is that of Type IV pilus assembly protein C from Neisseria gonorrhoeae (strain ATCC 700825 / FA 1090).